An 857-amino-acid polypeptide reads, in one-letter code: Protein translocase subunit SecA (857 aa).

ATP-binding positions include Gln-88, 106-110, and Asp-496; that span reads GEGKT. 4 residues coordinate Zn(2+): Cys-833, Cys-835, Cys-844, and Cys-845.

This sequence belongs to the SecA family. Monomer and homodimer. Part of the essential Sec protein translocation apparatus which comprises SecA, SecYEG and auxiliary proteins SecDF-YajC and YidC. Zn(2+) serves as cofactor.

It localises to the cell inner membrane. Its subcellular location is the cytoplasm. The catalysed reaction is ATP + H2O + cellular proteinSide 1 = ADP + phosphate + cellular proteinSide 2.. Part of the Sec protein translocase complex. Interacts with the SecYEG preprotein conducting channel. Has a central role in coupling the hydrolysis of ATP to the transfer of proteins into and across the cell membrane, serving as an ATP-driven molecular motor driving the stepwise translocation of polypeptide chains across the membrane. In Sulfurimonas denitrificans (strain ATCC 33889 / DSM 1251) (Thiomicrospira denitrificans (strain ATCC 33889 / DSM 1251)), this protein is Protein translocase subunit SecA.